We begin with the raw amino-acid sequence, 324 residues long: Sperm acrosome membrane-associated protein 6 (324 aa).

A signal peptide spans 1-26 (MALLALASAVPSALLALAVFRVPAWA). A CXXC motif motif is present at residues 27-30 (CLLC). Intrachain disulfides connect Cys-27–Cys-139, Cys-30–Cys-142, Cys-41–Cys-55, Cys-124–Cys-147, Cys-128–Cys-153, and Cys-170–Cys-226. The Extracellular segment spans residues 27-295 (CLLCFTTYSE…RPEALTPSNL (269 aa)). A CXXC motif motif is present at residues 139 to 142 (CSGC). One can recognise an Ig-like domain in the interval 150-236 (PLDCPVQDVT…VIKQDQRPLA (87 aa)). Asn-243 carries an N-linked (GlcNAc...) asparagine glycan. The chain crosses the membrane as a helical span at residues 296–316 (FLLAVLGALASASATVLAWMF). Over 317-324 (FRWYCSGN) the chain is Cytoplasmic.

It belongs to the SPACA6 family. In terms of assembly, forms a complex with IZUMO1 and TMEM81 on spermatocyte cell membrane required for fertilization. As to expression, detected at the sperm head, equatorial region, neck and midpiece (at protein level). Expressed in testis.

Its subcellular location is the cytoplasmic vesicle. It is found in the secretory vesicle. It localises to the acrosome membrane. Functionally, sperm protein required for fusion of sperm with the egg membrane during fertilization. May regulate the expression of sperm surface protein DCST2. This is Sperm acrosome membrane-associated protein 6 from Homo sapiens (Human).